The following is a 456-amino-acid chain: Hydroxymethylglutaryl-CoA synthase ERG13 (456 aa).

Alanine 35 lines the (3S)-3-hydroxy-3-methylglutaryl-CoA pocket. Glutamate 86 serves as the catalytic Proton donor/acceptor. (3S)-3-hydroxy-3-methylglutaryl-CoA-binding residues include cysteine 118, asparagine 156, threonine 160, serine 210, histidine 259, lysine 268, asparagine 336, and serine 370. Catalysis depends on cysteine 118, which acts as the Acyl-thioester intermediate. Histidine 259 acts as the Proton donor/acceptor in catalysis.

Belongs to the thiolase-like superfamily. HMG-CoA synthase family.

The catalysed reaction is acetoacetyl-CoA + acetyl-CoA + H2O = (3S)-3-hydroxy-3-methylglutaryl-CoA + CoA + H(+). The protein operates within metabolic intermediate biosynthesis; (R)-mevalonate biosynthesis; (R)-mevalonate from acetyl-CoA: step 2/3. Hydroxymethylglutaryl-CoA synthase; part of the first module of ergosterol biosynthesis pathway that includes the early steps of the pathway, conserved across all eukaryotes, and which results in the formation of mevalonate from acetyl-coenzyme A (acetyl-CoA). ERG13 condenses acetyl-CoA with acetoacetyl-CoA to form hydroxymethylglutaryl-CoA (HMG-CoA). The first module starts with the action of the cytosolic acetyl-CoA acetyltransferase ERG10B that catalyzes the formation of acetoacetyl-CoA. The hydroxymethylglutaryl-CoA synthases ERG13 then condenses acetyl-CoA with acetoacetyl-CoA to form HMG-CoA. The rate-limiting step of the early module is the reduction to mevalonate by the 3-hydroxy-3-methylglutaryl-coenzyme A (HMG-CoA) reductases HMG1. In Gibberella zeae (strain ATCC MYA-4620 / CBS 123657 / FGSC 9075 / NRRL 31084 / PH-1) (Wheat head blight fungus), this protein is Hydroxymethylglutaryl-CoA synthase ERG13.